The sequence spans 381 residues: rRNA adenine N-6-methyltransferase (381 aa).

Residues Met-1 to His-19 are compositionally biased toward basic and acidic residues. Positions Met-1–Asn-42 are disordered. Positions 42, 44, 69, 90, 115, and 131 each coordinate S-adenosyl-L-methionine. The interval Arg-282–Arg-381 is disordered. The span at Gly-301–Gly-358 shows a compositional bias: basic and acidic residues. Positions Arg-359–Arg-381 are enriched in gly residues.

Belongs to the class I-like SAM-binding methyltransferase superfamily. rRNA adenine N(6)-methyltransferase family.

It catalyses the reaction adenosine(2085) in 23S rRNA + 2 S-adenosyl-L-methionine = N(6)-dimethyladenosine(2085) in 23S rRNA + 2 S-adenosyl-L-homocysteine + 2 H(+). Its function is as follows. This protein produces a dimethylation of the adenine residue at position 2085 in 23S rRNA, resulting in reduced affinity between ribosomes and macrolide-lincosamide-streptogramin B antibiotics. This Saccharopolyspora erythraea (strain ATCC 11635 / DSM 40517 / JCM 4748 / NBRC 13426 / NCIMB 8594 / NRRL 2338) protein is rRNA adenine N-6-methyltransferase (ermE).